The chain runs to 147 residues: Large ribosomal subunit protein bL9 (147 aa).

The protein belongs to the bacterial ribosomal protein bL9 family.

Binds to the 23S rRNA. The chain is Large ribosomal subunit protein bL9 from Clostridium acetobutylicum (strain ATCC 824 / DSM 792 / JCM 1419 / IAM 19013 / LMG 5710 / NBRC 13948 / NRRL B-527 / VKM B-1787 / 2291 / W).